We begin with the raw amino-acid sequence, 399 residues long: S-adenosylmethionine synthase (399 aa).

His17 is an ATP binding site. Position 19 (Asp19) interacts with Mg(2+). Glu45 provides a ligand contact to K(+). The L-methionine site is built by Glu58 and Gln101. Positions Gln101–Gln111 are flexible loop. Residues Asp177 to Lys179, Arg244 to Phe245, Asp253, Arg259 to Lys260, Ala276, and Lys280 each bind ATP. L-methionine is bound at residue Asp253. Lys284 is an L-methionine binding site.

It belongs to the AdoMet synthase family. As to quaternary structure, homotetramer; dimer of dimers. The cofactor is Mg(2+). It depends on K(+) as a cofactor.

It localises to the cytoplasm. The enzyme catalyses L-methionine + ATP + H2O = S-adenosyl-L-methionine + phosphate + diphosphate. The protein operates within amino-acid biosynthesis; S-adenosyl-L-methionine biosynthesis; S-adenosyl-L-methionine from L-methionine: step 1/1. Catalyzes the formation of S-adenosylmethionine (AdoMet) from methionine and ATP. The overall synthetic reaction is composed of two sequential steps, AdoMet formation and the subsequent tripolyphosphate hydrolysis which occurs prior to release of AdoMet from the enzyme. In Bacillus mycoides (strain KBAB4) (Bacillus weihenstephanensis), this protein is S-adenosylmethionine synthase.